The sequence spans 477 residues: Argininosuccinate lyase (477 aa).

It belongs to the lyase 1 family. Argininosuccinate lyase subfamily.

It localises to the cytoplasm. It carries out the reaction 2-(N(omega)-L-arginino)succinate = fumarate + L-arginine. It participates in amino-acid biosynthesis; L-arginine biosynthesis; L-arginine from L-ornithine and carbamoyl phosphate: step 3/3. This Streptomyces avermitilis (strain ATCC 31267 / DSM 46492 / JCM 5070 / NBRC 14893 / NCIMB 12804 / NRRL 8165 / MA-4680) protein is Argininosuccinate lyase.